A 236-amino-acid chain; its full sequence is Phosphoribosylaminoimidazole-succinocarboxamide synthase (236 aa).

Belongs to the SAICAR synthetase family.

It carries out the reaction 5-amino-1-(5-phospho-D-ribosyl)imidazole-4-carboxylate + L-aspartate + ATP = (2S)-2-[5-amino-1-(5-phospho-beta-D-ribosyl)imidazole-4-carboxamido]succinate + ADP + phosphate + 2 H(+). It participates in purine metabolism; IMP biosynthesis via de novo pathway; 5-amino-1-(5-phospho-D-ribosyl)imidazole-4-carboxamide from 5-amino-1-(5-phospho-D-ribosyl)imidazole-4-carboxylate: step 1/2. The sequence is that of Phosphoribosylaminoimidazole-succinocarboxamide synthase from Streptococcus equi subsp. zooepidemicus (strain H70).